Consider the following 490-residue polypeptide: Cis-aconitate decarboxylase (490 aa).

Belongs to the PrpD family.

Its subcellular location is the mitochondrion. The catalysed reaction is cis-aconitate + H(+) = itaconate + CO2. In terms of biological role, involved in the production of itaconic acid, a soluble unsaturated dicarboxylic acid mainly produced from sugars. This chain is Cis-aconitate decarboxylase (cad1), found in Aspergillus terreus.